The following is a 317-amino-acid chain: Porphobilinogen deaminase (317 aa).

Cys-242 is subject to S-(dipyrrolylmethanemethyl)cysteine.

Belongs to the HMBS family. In terms of assembly, monomer. The cofactor is dipyrromethane.

It catalyses the reaction 4 porphobilinogen + H2O = hydroxymethylbilane + 4 NH4(+). Its pathway is porphyrin-containing compound metabolism; protoporphyrin-IX biosynthesis; coproporphyrinogen-III from 5-aminolevulinate: step 2/4. Tetrapolymerization of the monopyrrole PBG into the hydroxymethylbilane pre-uroporphyrinogen in several discrete steps. The sequence is that of Porphobilinogen deaminase from Colwellia psychrerythraea (strain 34H / ATCC BAA-681) (Vibrio psychroerythus).